The primary structure comprises 220 residues: Small ribosomal subunit protein uS3c (220 aa).

The region spanning 39–120 (IRDFIKNYVK…KLIIDIIRIT (82 aa)) is the KH type-2 domain.

It belongs to the universal ribosomal protein uS3 family. As to quaternary structure, part of the 30S ribosomal subunit.

The protein localises to the plastid. This is Small ribosomal subunit protein uS3c (rps3) from Epifagus virginiana (Beechdrops).